The primary structure comprises 377 residues: Chaperone MoxR1 (377 aa).

A disordered region spans residues 1-33 (MTSAGGFPAGAGGYQTPGGHSASPAHEAPPGGA). A compositionally biased stretch (gly residues) spans 7 to 16 (FPAGAGGYQT). The span at 19–33 (GHSASPAHEAPPGGA) shows a compositional bias: low complexity. Residue 78–85 (GVPGVAKT) participates in ATP binding.

The protein belongs to the MoxR family. In terms of assembly, interacts with RipA. Interacts with host Toll-like receptor 4 (TLR4).

In terms of biological role, displays ATP-enhanced chaperone activity. Required for the proper folding of the peptidoglycan endopeptidase RipA and its secretion through the TAT secretion system. In vitro, prevents thermal aggregation of MalZ protein and protects the functional activity of the restriction enzyme NdeI from thermal inactivation. Functionally, could be a moonlighting protein that uses a multipronged approach to dampen host-directed immunity for efficient replication, survival and pathogenesis. Can enhance virulence by inhibiting autophagy and apoptosis, and disrupting cellular bioenergetics. Binds and activates host TLR4 on the surface of macrophage cells, leading to the activation of the host NFKB and MAPK signaling cascades and enhanced secretion of proinflammatory cytokines. Inhibits autophagic flux via activation of PI3K-AKT-MTOR-ULK1 signaling cascade and represses apoptosis via inhibiting protooncogene c-FOS and MAPK JNK1/2. Also induces robust disruption of cellular bioenergetics by metabolic reprogramming to rewire the citric acid cycle intermediates for its benefit. The polypeptide is Chaperone MoxR1 (Mycobacterium tuberculosis (strain ATCC 25618 / H37Rv)).